Here is a 329-residue protein sequence, read N- to C-terminus: Acetyl-coenzyme A carboxylase carboxyl transferase subunit alpha (329 aa).

Positions 40 to 294 constitute a CoA carboxyltransferase C-terminal domain; the sequence is QLETLAARRR…KNALEKHLSE (255 aa).

Belongs to the AccA family. In terms of assembly, acetyl-CoA carboxylase is a heterohexamer composed of biotin carboxyl carrier protein (AccB), biotin carboxylase (AccC) and two subunits each of ACCase subunit alpha (AccA) and ACCase subunit beta (AccD).

It localises to the cytoplasm. The enzyme catalyses N(6)-carboxybiotinyl-L-lysyl-[protein] + acetyl-CoA = N(6)-biotinyl-L-lysyl-[protein] + malonyl-CoA. The protein operates within lipid metabolism; malonyl-CoA biosynthesis; malonyl-CoA from acetyl-CoA: step 1/1. Functionally, component of the acetyl coenzyme A carboxylase (ACC) complex. First, biotin carboxylase catalyzes the carboxylation of biotin on its carrier protein (BCCP) and then the CO(2) group is transferred by the carboxyltransferase to acetyl-CoA to form malonyl-CoA. This Prochlorococcus marinus (strain NATL1A) protein is Acetyl-coenzyme A carboxylase carboxyl transferase subunit alpha.